The primary structure comprises 295 residues: N-acetylmuramic acid 6-phosphate etherase (295 aa).

One can recognise an SIS domain in the interval 54 to 217 (VIAAFRRGGR…STASMVGIGK (164 aa)). E82 acts as the Proton donor in catalysis. E113 is an active-site residue.

Belongs to the GCKR-like family. MurNAc-6-P etherase subfamily. In terms of assembly, homodimer.

The catalysed reaction is N-acetyl-D-muramate 6-phosphate + H2O = N-acetyl-D-glucosamine 6-phosphate + (R)-lactate. The protein operates within amino-sugar metabolism; N-acetylmuramate degradation. In terms of biological role, specifically catalyzes the cleavage of the D-lactyl ether substituent of MurNAc 6-phosphate, producing GlcNAc 6-phosphate and D-lactate. In Geobacillus thermodenitrificans (strain NG80-2), this protein is N-acetylmuramic acid 6-phosphate etherase.